We begin with the raw amino-acid sequence, 546 residues long: Cytochrome P450 monooxygenase gloP (546 aa).

A helical transmembrane segment spans residues 17–37 (TLSGGILTFLFIVVIAHFVLT). 3 N-linked (GlcNAc...) asparagine glycosylation sites follow: Asn-189, Asn-413, and Asn-416. Cys-492 is a binding site for heme.

This sequence belongs to the cytochrome P450 family. The cofactor is heme.

It localises to the membrane. Its pathway is mycotoxin biosynthesis. Its function is as follows. Cytochrome P450 monooxygenase; part of the gene cluster that mediates the biosynthesis of pneumocandins, lipohexapeptides of the echinocandin family that prevent fungal cell wall formation by non-competitive inhibition of beta-1,3-glucan synthase. The 10,12-dimethylmyristoyl side chain is synthesized by the reducing polyketide synthase gloL/GLPKS4. The thioesterase gloN/GLHYD exclusively interacts with gloL/GLPKS4 to maintain turnover of the polyketide side chain. The 10R,12S-dimethylmyristic acid is then transferred to the first thiolation domain of the nonribosomal peptide synthetase gloA/GLNRPS4 by the acyl-AMP ligase gloD/GLligase, followed by its acylation to L-ornithine to trigger elongation of the cyclic hexapeptide. L-ornithine, 4R-hydroxyl-L-proline (generated from L-proline by the dioxygenase gloF/GLOXY2), 3S-hydroxyl-L-homotyrosine (generated by gloG/GLHtyB, gloH/GLHtyA, gloI/GLHtyC, gloJ/GLHtyD and hydroxylated at C-3 by the dioxygenase gloM/GLOXY1), 3R-hydroxyl-L-glutamine (generated from L-glutamine probably by the dioxygenase gloE/GLOXY3) and 3S-hydroxyl-L-proline (generated from L-proline by the dioxygenase gloF/GLOXY2 to yield pneumocandin B0), or 3S-hydroxyl-4S-methyl-L-proline (generated from L-leucine by the dioxygenase gloC/GLOXY4 to yield pneumocandin A0) are sequentially added to the growing chain. The last C domain of gloA/GLNRPS4 is proposed to be responsible for cyclization by condensation to form the peptide bond between L-ornithine and 3S-hydroxyl-4S-methyl-L-proline (for pneumocandin A0) or 3S-hydroxyl-L-proline (for pneumocandin B0). Finally, the subsequent C-4 hydroxylation of 3S-hydroxyl-L-homotyrosine and L-ornithine dihydroxylation at C-4 and C-5 are performed by the cytochrome P450 monooxygenases gloP/GLP450-1 and gloO/GLP450-2, respectively. In Glarea lozoyensis (strain ATCC 20868 / MF5171), this protein is Cytochrome P450 monooxygenase gloP.